A 414-amino-acid polypeptide reads, in one-letter code: Enolase (414 aa).

Glutamine 156 contributes to the (2R)-2-phosphoglycerate binding site. Glutamate 200 acts as the Proton donor in catalysis. Mg(2+) contacts are provided by aspartate 236, glutamate 281, and aspartate 308. Residues lysine 333, arginine 362, serine 363, and lysine 384 each contribute to the (2R)-2-phosphoglycerate site. The active-site Proton acceptor is the lysine 333.

It belongs to the enolase family. Mg(2+) is required as a cofactor.

The protein localises to the cytoplasm. It is found in the secreted. Its subcellular location is the cell surface. The enzyme catalyses (2R)-2-phosphoglycerate = phosphoenolpyruvate + H2O. It functions in the pathway carbohydrate degradation; glycolysis; pyruvate from D-glyceraldehyde 3-phosphate: step 4/5. In terms of biological role, catalyzes the reversible conversion of 2-phosphoglycerate (2-PG) into phosphoenolpyruvate (PEP). It is essential for the degradation of carbohydrates via glycolysis. The polypeptide is Enolase (Methanosphaera stadtmanae (strain ATCC 43021 / DSM 3091 / JCM 11832 / MCB-3)).